The following is a 470-amino-acid chain: Nuclear receptor subfamily 0 group B member 1 (470 aa).

Repeat copies occupy residues 1 to 67 (MAGE…YRCC), 68 to 133 (FCGK…YRCC), and 134 to 200 (FCGE…YRCC). Residues 1–253 (MAGENHQWQG…RPVALKSPQV (253 aa)) form a 4 X 67 AA tandem repeats region. Short sequence motifs (LXXLL motif) lie at residues 13-17 (LYNML), 80-84 (LYSML), and 146-150 (LYSLL). The stretch at 201-253 (FCGEDHPQQGSTLYCMPTSTNQAQAAPEERPRAPWWDTSSGALRPVALKSPQV) is one 4; truncated repeat. The region spanning 205-469 (DHPQQGSTLY…DMMLEMLCTK (265 aa)) is the NR LBD domain. Residues 461-466 (MMLEML) carry the AF-2 motif motif.

This sequence belongs to the nuclear hormone receptor family. NR0 subfamily. As to quaternary structure, homodimer. Interacts with NR5A1, NR5A2, NR0B2 and with COPS2. Interacts with ESRRB; represses ESRRB activity at the GATA6 promoter.

It is found in the nucleus. The protein localises to the cytoplasm. Its function is as follows. Nuclear receptor that lacks a DNA-binding domain and acts as a corepressor that inhibits the transcriptional activity of other nuclear receptors through heterodimeric interactions. Component of a cascade required for the development of the hypothalamic-pituitary-adrenal-gonadal axis. May also have a role in the development of the embryo and in the maintenance of embryonic stem cell pluripotency. The protein is Nuclear receptor subfamily 0 group B member 1 (NR0B1) of Pan troglodytes (Chimpanzee).